The primary structure comprises 157 residues: Small ribosomal subunit protein bS16 (157 aa).

The segment at 114 to 157 (NEGPTAEAITEKKKKAKEEAAAKAAAEAEAAAKAEEAPAEEAAE) is disordered.

It belongs to the bacterial ribosomal protein bS16 family.

This Corynebacterium diphtheriae (strain ATCC 700971 / NCTC 13129 / Biotype gravis) protein is Small ribosomal subunit protein bS16.